The primary structure comprises 127 residues: Two-component response regulator ORR41 (127 aa).

In terms of domain architecture, Response regulatory spans 7–125; sequence RVLLVEDEEI…KLGVILAKFR (119 aa). Aspartate 60 is modified (4-aspartylphosphate).

This sequence belongs to the ARR family. Type-C subfamily. In terms of processing, two-component system major event consists of a His-to-Asp phosphorelay between a sensor histidine kinase (HK) and a response regulator (RR). In plants, the His-to-Asp phosphorelay involves an additional intermediate named Histidine-containing phosphotransfer protein (HPt). This multistep phosphorelay consists of a His-Asp-His-Asp sequential transfer of a phosphate group between first a His and an Asp of the HK protein, followed by the transfer to a conserved His of the HPt protein and finally the transfer to an Asp in the receiver domain of the RR protein.

Functions as a response regulator involved in His-to-Asp phosphorelay signal transduction system. Phosphorylation of the Asp residue in the receiver domain activates the ability of the protein to promote the transcription of target genes. May directly activate some type-A response regulators in response to cytokinins. This chain is Two-component response regulator ORR41, found in Oryza sativa subsp. japonica (Rice).